Here is a 288-residue protein sequence, read N- to C-terminus: Polyamine aminopropyltransferase (288 aa).

Residues 9 to 238 enclose the PABS domain; it reads ETLHDQFGQY…GIMTFAWATD (230 aa). Position 33 (Q33) interacts with S-methyl-5'-thioadenosine. Positions 64 and 88 each coordinate spermidine. S-methyl-5'-thioadenosine contacts are provided by residues E108 and 140–141; that span reads DG. Catalysis depends on D158, which acts as the Proton acceptor. Residue 158-161 participates in spermidine binding; the sequence is DCTD. S-methyl-5'-thioadenosine is bound at residue P165.

Belongs to the spermidine/spermine synthase family. In terms of assembly, homodimer or homotetramer.

It is found in the cytoplasm. The catalysed reaction is S-adenosyl 3-(methylsulfanyl)propylamine + putrescine = S-methyl-5'-thioadenosine + spermidine + H(+). The protein operates within amine and polyamine biosynthesis; spermidine biosynthesis; spermidine from putrescine: step 1/1. Functionally, catalyzes the irreversible transfer of a propylamine group from the amino donor S-adenosylmethioninamine (decarboxy-AdoMet) to putrescine (1,4-diaminobutane) to yield spermidine. The protein is Polyamine aminopropyltransferase of Shigella flexneri serotype 5b (strain 8401).